The sequence spans 184 residues: ATP-dependent protease subunit HslV (184 aa).

The active site involves threonine 12. Na(+)-binding residues include alanine 166, cysteine 169, and threonine 172.

Belongs to the peptidase T1B family. HslV subfamily. In terms of assembly, a double ring-shaped homohexamer of HslV is capped on each side by a ring-shaped HslU homohexamer. The assembly of the HslU/HslV complex is dependent on binding of ATP.

Its subcellular location is the cytoplasm. It catalyses the reaction ATP-dependent cleavage of peptide bonds with broad specificity.. With respect to regulation, allosterically activated by HslU binding. Protease subunit of a proteasome-like degradation complex believed to be a general protein degrading machinery. This Brucella anthropi (strain ATCC 49188 / DSM 6882 / CCUG 24695 / JCM 21032 / LMG 3331 / NBRC 15819 / NCTC 12168 / Alc 37) (Ochrobactrum anthropi) protein is ATP-dependent protease subunit HslV.